The sequence spans 383 residues: MVIDPVTLSQELISFPSITPTDNGAISFLSDILSQYGFTCHILDFGDDTVTVRNLYAYRGTEEGPNLCFAGHTDVVKTGDLTKWKFDPFSGHIEDDILYGRGAVDMKSAICAFIAAVSRINFNEVPGSISFLISGDEEGDHFQYGTPSVLKWLNENNHKIDYCIIGEPTSKSFLGDTIKVGRRGSVHFKIICNGIQGHVAYPHFAENPIDNMVSILYKICNTTFDTGNEYFQPSNCEIVSVDTGNTSKNVIPDTIVAHINIRYNNIHTAESLFDIINNICAQVTPKYQLLQSVSGEPFFNQPNQYSDMLSSAIKKVTGQDAIASTSGGVSDSRFIKNVCPVIEFGLKNETAHKIDEHVPVKEIYQLADIYTEFIKQFFNLSTT.

Position 72 (His-72) interacts with Zn(2+). Residue Asp-74 is part of the active site. Residue Asp-105 coordinates Zn(2+). The Proton acceptor role is filled by Glu-137. Glu-138, Glu-167, and His-352 together coordinate Zn(2+).

This sequence belongs to the peptidase M20A family. DapE subfamily. As to quaternary structure, homodimer. The cofactor is Zn(2+). Co(2+) serves as cofactor.

The enzyme catalyses N-succinyl-(2S,6S)-2,6-diaminopimelate + H2O = (2S,6S)-2,6-diaminopimelate + succinate. It participates in amino-acid biosynthesis; L-lysine biosynthesis via DAP pathway; LL-2,6-diaminopimelate from (S)-tetrahydrodipicolinate (succinylase route): step 3/3. Catalyzes the hydrolysis of N-succinyl-L,L-diaminopimelic acid (SDAP), forming succinate and LL-2,6-diaminopimelate (DAP), an intermediate involved in the bacterial biosynthesis of lysine and meso-diaminopimelic acid, an essential component of bacterial cell walls. The polypeptide is Succinyl-diaminopimelate desuccinylase (Ehrlichia ruminantium (strain Welgevonden)).